Consider the following 234-residue polypeptide: Purine nucleoside phosphorylase DeoD-type (234 aa).

H4 lines the a purine D-ribonucleoside pocket. Residues G20, R24, R43, and 87–90 contribute to the phosphate site; that span reads RVGT. Residues E162, 178 to 180, and 202 to 203 contribute to the a purine D-ribonucleoside site; these read EME and SD. The active-site Proton donor is D203.

It belongs to the PNP/UDP phosphorylase family. As to quaternary structure, homohexamer; trimer of homodimers.

It catalyses the reaction a purine D-ribonucleoside + phosphate = a purine nucleobase + alpha-D-ribose 1-phosphate. The catalysed reaction is a purine 2'-deoxy-D-ribonucleoside + phosphate = a purine nucleobase + 2-deoxy-alpha-D-ribose 1-phosphate. Its function is as follows. Catalyzes the reversible phosphorolytic breakdown of the N-glycosidic bond in the beta-(deoxy)ribonucleoside molecules, with the formation of the corresponding free purine bases and pentose-1-phosphate. Cleavage of adenosine and its derivatives. The polypeptide is Purine nucleoside phosphorylase DeoD-type (Geobacillus stearothermophilus (Bacillus stearothermophilus)).